The following is a 1407-amino-acid chain: DNA-directed RNA polymerase subunit beta' (1407 aa).

The Zn(2+) site is built by cysteine 70, cysteine 72, cysteine 85, and cysteine 88. Residues aspartate 460, aspartate 462, and aspartate 464 each contribute to the Mg(2+) site. Zn(2+) contacts are provided by cysteine 814, cysteine 888, cysteine 895, and cysteine 898. Lysine 972 carries the N6-acetyllysine modification.

This sequence belongs to the RNA polymerase beta' chain family. The RNAP catalytic core consists of 2 alpha, 1 beta, 1 beta' and 1 omega subunit. When a sigma factor is associated with the core the holoenzyme is formed, which can initiate transcription. Mg(2+) is required as a cofactor. Zn(2+) serves as cofactor.

The enzyme catalyses RNA(n) + a ribonucleoside 5'-triphosphate = RNA(n+1) + diphosphate. In terms of biological role, DNA-dependent RNA polymerase catalyzes the transcription of DNA into RNA using the four ribonucleoside triphosphates as substrates. The sequence is that of DNA-directed RNA polymerase subunit beta' from Shigella boydii serotype 18 (strain CDC 3083-94 / BS512).